Reading from the N-terminus, the 214-residue chain is Leucyl/phenylalanyl-tRNA--protein transferase (214 aa).

It belongs to the L/F-transferase family.

It is found in the cytoplasm. It catalyses the reaction N-terminal L-lysyl-[protein] + L-leucyl-tRNA(Leu) = N-terminal L-leucyl-L-lysyl-[protein] + tRNA(Leu) + H(+). It carries out the reaction N-terminal L-arginyl-[protein] + L-leucyl-tRNA(Leu) = N-terminal L-leucyl-L-arginyl-[protein] + tRNA(Leu) + H(+). The enzyme catalyses L-phenylalanyl-tRNA(Phe) + an N-terminal L-alpha-aminoacyl-[protein] = an N-terminal L-phenylalanyl-L-alpha-aminoacyl-[protein] + tRNA(Phe). Functions in the N-end rule pathway of protein degradation where it conjugates Leu, Phe and, less efficiently, Met from aminoacyl-tRNAs to the N-termini of proteins containing an N-terminal arginine or lysine. The protein is Leucyl/phenylalanyl-tRNA--protein transferase of Cereibacter sphaeroides (strain KD131 / KCTC 12085) (Rhodobacter sphaeroides).